The sequence spans 178 residues: Large ribosomal subunit protein uL10 (178 aa).

Belongs to the universal ribosomal protein uL10 family. In terms of assembly, part of the ribosomal stalk of the 50S ribosomal subunit. The N-terminus interacts with L11 and the large rRNA to form the base of the stalk. The C-terminus forms an elongated spine to which L12 dimers bind in a sequential fashion forming a multimeric L10(L12)X complex.

Forms part of the ribosomal stalk, playing a central role in the interaction of the ribosome with GTP-bound translation factors. The sequence is that of Large ribosomal subunit protein uL10 from Dictyoglomus thermophilum (strain ATCC 35947 / DSM 3960 / H-6-12).